A 119-amino-acid polypeptide reads, in one-letter code: Protein phosphatase EYA3 (119 aa).

It belongs to the HAD-like hydrolase superfamily. EYA family. Mg(2+) serves as cofactor.

It is found in the cytoplasm. Its subcellular location is the nucleus. It catalyses the reaction O-phospho-L-tyrosyl-[protein] + H2O = L-tyrosyl-[protein] + phosphate. In terms of biological role, tyrosine phosphatase that specifically dephosphorylates 'Tyr-142' of histone H2AX (H2AXY142ph). 'Tyr-142' phosphorylation of histone H2AX plays a central role in DNA repair and acts as a mark that distinguishes between apoptotic and repair responses to genotoxic stress. Promotes efficient DNA repair by dephosphorylating H2AX, promoting the recruitment of DNA repair complexes containing MDC1. Its function as histone phosphatase probably explains its role in transcription regulation during organogenesis. May be involved in development of the eye. This chain is Protein phosphatase EYA3 (EYA3), found in Gallus gallus (Chicken).